A 695-amino-acid polypeptide reads, in one-letter code: Interleukin-1 receptor accessory protein-like 1 (695 aa).

The first 24 residues, 1 to 24, serve as a signal peptide directing secretion; it reads MKAPIPHLILLYATFTQSLKVVTK. Positions 25 to 134 constitute an Ig-like C2-type 1 domain; it reads RGSADGCTDW…YCMKVSISLT (110 aa). Topologically, residues 25–357 are extracellular; sequence RGSADGCTDW…LLHKRELMYT (333 aa). Intrachain disulfides connect Cys31–Cys126 and Cys53–Cys118. 3 N-linked (GlcNAc...) asparagine glycosylation sites follow: Asn63, Asn122, and Asn138. Cystine bridges form between Cys143–Cys185 and Cys164–Cys216. 2 consecutive Ig-like C2-type domains span residues 143-232 and 242-350; these read CYNS…TELT and PKLL…VLLH. 3 N-linked (GlcNAc...) asparagine glycosylation sites follow: Asn213, Asn264, and Asn331. Cysteines 267 and 334 form a disulfide. The helical transmembrane segment at 358–378 threads the bilayer; sequence VELAGGLGAILLLLICSVTIY. The Cytoplasmic portion of the chain corresponds to 379–695; that stretch reads KCYKIEIMLF…RETSISSVIW (317 aa). One can recognise a TIR domain in the interval 403 to 558; sequence KDYDAYLSYT…KFWKRLQYEM (156 aa). Residue Glu490 is part of the active site. Positions 548–643 are interaction with NCS1; it reads SKFWKRLQYE…TGTLPLTSIG (96 aa). A disordered region spans residues 657-679; it reads NGQRPQTKSNREPNPDEAHTNSA. Positions 665-675 are enriched in basic and acidic residues; sequence SNREPNPDEAH.

This sequence belongs to the interleukin-1 receptor family. Homodimer. Interacts (calcium-independent) with NCS1/FREQ. Interacts (via the first immunoglobilin domain) with PTPRD (via the second immunoglobilin domain); this interaction is PTPRD-splicing-dependent and induces pre- and post-synaptic differentiation of neurons and is required for IL1RAPL1-mediated synapse formation. In terms of tissue distribution, detected in total brain extracts, olfactory bulb, hippocampus and striatum (at protein level).

The protein localises to the cell membrane. The protein resides in the cytoplasm. Its subcellular location is the cell projection. It is found in the axon. It localises to the dendrite. It catalyses the reaction NAD(+) + H2O = ADP-D-ribose + nicotinamide + H(+). Functionally, may regulate secretion and presynaptic differentiation through inhibition of the activity of N-type voltage-gated calcium channel. May activate the MAP kinase JNK. Plays a role in neurite outgrowth. During dendritic spine formation can bidirectionally induce pre- and post-synaptic differentiation of neurons by trans-synaptically binding to PTPRD. This is Interleukin-1 receptor accessory protein-like 1 (Il1rapl1) from Mus musculus (Mouse).